We begin with the raw amino-acid sequence, 138 residues long: Large ribosomal subunit protein uL16 (138 aa).

Over residues 1-17 (MLIPRRVKHRKQHHPTR) the composition is skewed to basic residues. The interval 1-24 (MLIPRRVKHRKQHHPTRRGAASGG) is disordered.

The protein belongs to the universal ribosomal protein uL16 family. In terms of assembly, part of the 50S ribosomal subunit.

Functionally, binds 23S rRNA and is also seen to make contacts with the A and possibly P site tRNAs. This is Large ribosomal subunit protein uL16 from Kineococcus radiotolerans (strain ATCC BAA-149 / DSM 14245 / SRS30216).